We begin with the raw amino-acid sequence, 66 residues long: Trypsin inhibitor (66 aa).

Cystine bridges form between cysteine 5/cysteine 28, cysteine 16/cysteine 44, cysteine 19/cysteine 58, cysteine 21/cysteine 38, and cysteine 43/cysteine 64.

The protein resides in the secreted. The polypeptide is Trypsin inhibitor (Ascaris suum (Pig roundworm)).